The following is a 250-amino-acid chain: Accessory gland-specific peptide 26Aa (250 aa).

A signal peptide spans 1–18 (MNQILLCSQILLLFFTVA). The disordered stretch occupies residues 79-100 (DYPINNSKSRKNSSTLPSPILT). Positions 82 to 95 (INNSKSRKNSSTLP) are enriched in polar residues. N-linked (GlcNAc...) asparagine glycans are attached at residues asparagine 83, asparagine 90, and asparagine 131. Disordered regions lie at residues 172-191 (NVQN…SKDI) and 230-250 (NNPA…PSTT). The segment covering 178–187 (KSTKSCKKRP) has biased composition (basic residues). Over residues 240–250 (KSPSEGNPSTT) the composition is skewed to polar residues.

Post-translationally, proteolytically cleaved as it is secreted and in the recipient female. In terms of tissue distribution, main cells of the accessory glands of males.

The protein localises to the secreted. It is found in the extracellular space. This protein is transferred from male to female's hemolymph during mating, affecting egglaying and behavior after mating. The polypeptide is Accessory gland-specific peptide 26Aa (Acp26Aa) (Drosophila mauritiana (Fruit fly)).